The sequence spans 75 residues: Molt-inhibiting hormone (75 aa).

Cystine bridges form between C7-C44, C24-C40, and C27-C53. A75 carries the post-translational modification Alanine amide.

This sequence belongs to the arthropod CHH/MIH/GIH/VIH hormone family.

It localises to the secreted. Its function is as follows. Inhibits Y-organs where molting hormone (ecdysteroid) is secreted. A molting cycle is initiated when MIH secretion diminishes or stops. The protein is Molt-inhibiting hormone of Procambarus clarkii (Red swamp crayfish).